Reading from the N-terminus, the 510-residue chain is MARRGRRSLASPAVAIALFVFLAYGGGGGGGGVCEAAPASAVVKSVPGFDGALPSKHYAGYVTVEEQHGRNLFYYLVESERDPAKDPLVLWLNGGPGCSSFDGFVYEHGPFNFESGGSAKSLPKLHLNPYSWSKVSSVIYLDSPAGVGLSYSKNTSDYNTGDLKTAADSHTFLLKWFQLYPEFLSNPFYIAGESYAGVYVPTLSHEVVKGLHDGVKPTINFKGYMVGNGVCDTVFDGNALVPFAHGMALISDDIYQEAQTACHGNYWNTTTDKCENALYKVDTSINDLNIYDILEPCYHSKTIKKVTPANTKLPKSFQHLGTTTKPLAVRTRMHGRAWPLRAPVRAGRVPSWQEFARGSRPSGVPCMSDEVATAWLNNDDVRAAIHAQPVSSIGSWLICTNVLDFIHDAGSMISYHKNLTGQGYRAFIYSGDHDMCVPYTGTEAWTRSLGYGVIDSWRPWHLNGQVSGYTQGYEHGLTFATIKGAGHTVPEYKPQESLAFYSRWLAGSKL.

The N-terminal stretch at 1–25 (MARRGRRSLASPAVAIALFVFLAYG) is a signal peptide. Residues 26–36 (GGGGGGGVCEA) constitute a propeptide that is removed on maturation. Cystine bridges form between Cys98–Cys399, Cys262–Cys274, and Cys297–Cys366. Residue Asn154 is glycosylated (N-linked (GlcNAc...) asparagine). Residue Ser194 is part of the active site. N-linked (GlcNAc...) asparagine glycosylation occurs at Asn268. Residues 303 to 362 (IKKVTPANTKLPKSFQHLGTTTKPLAVRTRMHGRAWPLRAPVRAGRVPSWQEFARGSRPS) constitute a propeptide, linker peptide. N-linked (GlcNAc...) asparagine glycosylation is present at Asn418. Residues Asp434 and His487 contribute to the active site. The Microbody targeting signal motif lies at 508–510 (SKL).

This sequence belongs to the peptidase S10 family.

The enzyme catalyses Release of a C-terminal amino acid with broad specificity.. The polypeptide is Serine carboxypeptidase 1 (CBP1) (Oryza sativa subsp. japonica (Rice)).